Here is a 429-residue protein sequence, read N- to C-terminus: Small ribosomal subunit protein bS1 (429 aa).

S1 motif domains follow at residues 55 to 128 (GDVV…LSKK), 144 to 211 (GDTV…SRKA), 231 to 299 (GEVV…LSIK), and 316 to 385 (GSVL…LSMK). Over residues 382 to 399 (LSMKALEEKPEREDRRGN) the composition is skewed to basic and acidic residues. The disordered stretch occupies residues 382-412 (LSMKALEEKPEREDRRGNDGSASRADIAAYK).

It belongs to the bacterial ribosomal protein bS1 family.

Functionally, binds mRNA; thus facilitating recognition of the initiation point. It is needed to translate mRNA with a short Shine-Dalgarno (SD) purine-rich sequence. This is Small ribosomal subunit protein bS1 (rps1) from Leuconostoc lactis.